The sequence spans 87 residues: MVNMKASMFLTFAGLVLLFVVCYASESEEKEFPKEMLSSIFAVDNDFKQEERDCAGYMRECKEKLCCNGYVCSSRWKWCVLPAPWRR.

The first 24 residues, 1–24, serve as a signal peptide directing secretion; that stretch reads MVNMKASMFLTFAGLVLLFVVCYA. Residues 25-52 constitute a propeptide that is removed on maturation; that stretch reads SESEEKEFPKEMLSSIFAVDNDFKQEER. 3 disulfide bridges follow: cysteine 54–cysteine 67, cysteine 61–cysteine 72, and cysteine 66–cysteine 79.

The protein belongs to the neurotoxin 10 (Hwtx-1) family. 51 (Hntx-8) subfamily. Hntx-8 sub-subfamily. In terms of tissue distribution, expressed by the venom gland.

The protein localises to the secreted. Functionally, ion channel inhibitor. The chain is U3-theraphotoxin-Hhn1m from Cyriopagopus hainanus (Chinese bird spider).